Here is a 139-residue protein sequence, read N- to C-terminus: ATP synthase epsilon chain (139 aa).

This sequence belongs to the ATPase epsilon chain family. As to quaternary structure, F-type ATPases have 2 components, CF(1) - the catalytic core - and CF(0) - the membrane proton channel. CF(1) has five subunits: alpha(3), beta(3), gamma(1), delta(1), epsilon(1). CF(0) has three main subunits: a, b and c.

It localises to the cell inner membrane. Produces ATP from ADP in the presence of a proton gradient across the membrane. This is ATP synthase epsilon chain from Actinobacillus pleuropneumoniae serotype 5b (strain L20).